A 175-amino-acid chain; its full sequence is Ribulose bisphosphate carboxylase small subunit, chloroplastic 2 (175 aa).

Residues 1 to 46 constitute a chloroplast transit peptide; that stretch reads MAPAVMASSATTVAPFQGLKSTAGLPISCRSGSTGLSSVSNGGRIR.

This sequence belongs to the RuBisCO small chain family. As to quaternary structure, heterohexadecamer of 8 large and 8 small subunits.

It is found in the plastid. It localises to the chloroplast. Functionally, ruBisCO catalyzes two reactions: the carboxylation of D-ribulose 1,5-bisphosphate, the primary event in carbon dioxide fixation, as well as the oxidative fragmentation of the pentose substrate. Both reactions occur simultaneously and in competition at the same active site. Although the small subunit is not catalytic it is essential for maximal activity. The sequence is that of Ribulose bisphosphate carboxylase small subunit, chloroplastic 2 from Triticum aestivum (Wheat).